Consider the following 440-residue polypeptide: Thymidine phosphorylase (440 aa).

The protein belongs to the thymidine/pyrimidine-nucleoside phosphorylase family. In terms of assembly, homodimer.

It carries out the reaction thymidine + phosphate = 2-deoxy-alpha-D-ribose 1-phosphate + thymine. It participates in pyrimidine metabolism; dTMP biosynthesis via salvage pathway; dTMP from thymine: step 1/2. The enzymes which catalyze the reversible phosphorolysis of pyrimidine nucleosides are involved in the degradation of these compounds and in their utilization as carbon and energy sources, or in the rescue of pyrimidine bases for nucleotide synthesis. The polypeptide is Thymidine phosphorylase (Escherichia coli O127:H6 (strain E2348/69 / EPEC)).